Here is a 139-residue protein sequence, read N- to C-terminus: Large ribosomal subunit protein uL16 (139 aa).

Belongs to the universal ribosomal protein uL16 family. As to quaternary structure, part of the 50S ribosomal subunit.

Functionally, binds 23S rRNA and is also seen to make contacts with the A and possibly P site tRNAs. The chain is Large ribosomal subunit protein uL16 from Prosthecochloris aestuarii (strain DSM 271 / SK 413).